Here is a 155-residue protein sequence, read N- to C-terminus: Small ribosomal subunit protein uS7c (155 aa).

This sequence belongs to the universal ribosomal protein uS7 family. As to quaternary structure, part of the 30S ribosomal subunit.

It localises to the plastid. The protein localises to the chloroplast. Its function is as follows. One of the primary rRNA binding proteins, it binds directly to 16S rRNA where it nucleates assembly of the head domain of the 30S subunit. This Aristolochia macrophylla (Dutchman's pipe vine) protein is Small ribosomal subunit protein uS7c (rps7).